The chain runs to 185 residues: Adenine phosphoribosyltransferase (185 aa).

Belongs to the purine/pyrimidine phosphoribosyltransferase family. In terms of assembly, homodimer.

It is found in the cytoplasm. The catalysed reaction is AMP + diphosphate = 5-phospho-alpha-D-ribose 1-diphosphate + adenine. Its pathway is purine metabolism; AMP biosynthesis via salvage pathway; AMP from adenine: step 1/1. In terms of biological role, catalyzes a salvage reaction resulting in the formation of AMP, that is energically less costly than de novo synthesis. The protein is Adenine phosphoribosyltransferase of Arthrobacter sp. (strain FB24).